Reading from the N-terminus, the 335-residue chain is Delta(7)-sterol 5(6)-desaturase erg3B (335 aa).

Helical transmembrane passes span 74–94 (IWAF…ALVF), 113–133 (IGQA…LFLA), and 152–172 (LYTY…IYWI). Positions 160-284 (LFIAFTDFAI…FITFWDRIGG (125 aa)) constitute a Fatty acid hydroxylase domain. The Histidine box-1 motif lies at 173-177 (HRGLH). Positions 186-190 (HKPHH) match the Histidine box-2 motif. The helical transmembrane segment at 219-239 (PFLFPLQKAAYLGLFVFVTIW) threads the bilayer. N256 is a glycosylation site (N-linked (GlcNAc...) asparagine). Residues 261 to 265 (HTIHH) carry the Histidine box-3 motif.

This sequence belongs to the sterol desaturase family. Requires Fe cation as cofactor.

Its subcellular location is the endoplasmic reticulum membrane. It participates in steroid metabolism; ergosterol biosynthesis. In terms of biological role, delta(7)-sterol 5(6)-desaturase; part of the third module of ergosterol biosynthesis pathway that includes the late steps of the pathway. Erg3B catalyzes the introduction of a C-5 double bond in the B ring to produce 5-dehydroepisterol. The third module or late pathway involves the ergosterol synthesis itself through consecutive reactions that mainly occur in the endoplasmic reticulum (ER) membrane. Firstly, the squalene synthase erg9 catalyzes the condensation of 2 farnesyl pyrophosphate moieties to form squalene, which is the precursor of all steroids. Squalene synthase is crucial for balancing the incorporation of farnesyl diphosphate (FPP) into sterol and nonsterol isoprene synthesis. Secondly, squalene is converted into lanosterol by the consecutive action of the squalene epoxidase erg1 and the lanosterol synthase erg7. Then, the delta(24)-sterol C-methyltransferase erg6 methylates lanosterol at C-24 to produce eburicol. Eburicol is the substrate of the sterol 14-alpha demethylase encoded by cyp51A and cyp51B, to yield 4,4,24-trimethyl ergosta-8,14,24(28)-trienol. The C-14 reductase erg24 then reduces the C14=C15 double bond which leads to 4,4-dimethylfecosterol. A sequence of further demethylations at C-4, involving the C-4 demethylation complex containing the C-4 methylsterol oxidases erg25A or erg25B, the sterol-4-alpha-carboxylate 3-dehydrogenase erg26 and the 3-keto-steroid reductase erg27, leads to the production of fecosterol via 4-methylfecosterol. The C-8 sterol isomerase erg2 then catalyzes the reaction which results in unsaturation at C-7 in the B ring of sterols and thus converts fecosterol to episterol. The sterol-C5-desaturase erg3B then catalyzes the introduction of a C-5 double bond in the B ring to produce 5-dehydroepisterol. The 2 other sterol-C5-desaturases, erg3A and erg3C, seem to be less important in ergosterol biosynthesis. The C-22 sterol desaturase erg5 further converts 5-dehydroepisterol into ergosta-5,7,22,24(28)-tetraen-3beta-ol by forming the C-22(23) double bond in the sterol side chain. Finally, ergosta-5,7,22,24(28)-tetraen-3beta-ol is substrate of the C-24(28) sterol reductases erg4A and erg4B to produce ergosterol. Possible alternative sterol biosynthetic pathways might exist from fecosterol to ergosterol, depending on the activities of the erg3 isoforms. In Aspergillus fumigatus (strain ATCC MYA-4609 / CBS 101355 / FGSC A1100 / Af293) (Neosartorya fumigata), this protein is Delta(7)-sterol 5(6)-desaturase erg3B.